We begin with the raw amino-acid sequence, 324 residues long: tRNA-modifying protein YgfZ (324 aa).

Trp184 contributes to the folate binding site.

This sequence belongs to the tRNA-modifying YgfZ family.

Its subcellular location is the cytoplasm. Folate-binding protein involved in regulating the level of ATP-DnaA and in the modification of some tRNAs. It is probably a key factor in regulatory networks that act via tRNA modification, such as initiation of chromosomal replication. This chain is tRNA-modifying protein YgfZ, found in Vibrio vulnificus (strain CMCP6).